The sequence spans 396 residues: Elongation factor Tu (396 aa).

The tr-type G domain occupies 10–206 (KPHVNVGTIG…ALDTYIPLPE (197 aa)). The segment at 19 to 26 (GHVDHGKT) is G1. 19–26 (GHVDHGKT) is a binding site for GTP. Residue T26 participates in Mg(2+) binding. Residues 60–64 (GITIN) are G2. Residues 81–84 (DCPG) form a G3 region. Residues 81–85 (DCPGH) and 136–139 (NKCD) each bind GTP. Positions 136-139 (NKCD) are G4. The G5 stretch occupies residues 174–176 (SAK).

This sequence belongs to the TRAFAC class translation factor GTPase superfamily. Classic translation factor GTPase family. EF-Tu/EF-1A subfamily. Monomer.

The protein localises to the cytoplasm. It carries out the reaction GTP + H2O = GDP + phosphate + H(+). Its function is as follows. GTP hydrolase that promotes the GTP-dependent binding of aminoacyl-tRNA to the A-site of ribosomes during protein biosynthesis. The polypeptide is Elongation factor Tu (Polaromonas sp. (strain JS666 / ATCC BAA-500)).